The chain runs to 261 residues: Dienlactone hydrolase 1 (261 aa).

Residues Cys-147, Asp-194, and His-226 contribute to the active site.

It belongs to the dienelactone hydrolase family.

It functions in the pathway xenobiotic degradation. In terms of biological role, dienlactone hydrolase; part of the Fusarium detoxification of benzoxazolinone cluster 1 (FDB1) involved in the degradation of benzoxazolinones produced by the host plant. Maize, wheat, and rye produce the 2 benzoxazinone phytoanticipins 2,4-dihy-droxy-7-methoxy-1,4-benzoxazin-3-one (DIMBOA) and 2,4-dihydroxy-1,4-benzoxazin-3-one (DIBOA) that, due to their inherent instability once released, spontaneously degrade to the more stable corresponding benzoxazolinones, 6-methoxy-2-benzoxazolinone (MBOA) and 2-benzoxazolinone (BOA), respectively. The first step in the detoxification of benzoxazolinones involves the hydrolysis of the cyclic ester bond of benzoxazolinones by the FDB1 cluster gamma-lactamase MBL1 to aminophenols. MBL1 is able to convert BOA into 2-aminophenol (2-AP), as well as MBOA into 5-methoxy-2-aminophenol (2-AMP). The FDB2 cluster N-malonyltransferase FDB2/NAT1 then metabolizes aminophenols via N-malonylation to non-toxic malonamic acids. FDB2/NAT1 converts 2-AP into N-(2-hydroxyphenyl) malonamic acid (HPMA) and 2-AMP into N-(2-hydroxy-4-methoxyphenyl) malonamic acid (HMPMA). The duplicated dienlactone hydrolases DLH1 and DLH2 may provide redundant function for hydrolyzing the lactone moiety in the BOA molecule. The roles of the amidases and other enzymes encoded by the 2 FDB clusters have not been identified so far. The chain is Dienlactone hydrolase 1 from Gibberella moniliformis (strain M3125 / FGSC 7600) (Maize ear and stalk rot fungus).